Here is a 638-residue protein sequence, read N- to C-terminus: Threonine--tRNA ligase (638 aa).

Positions 1–61 (MPLITLPDGN…DKDCSVKIFT (61 aa)) constitute a TGS domain. Residues 243–535 (DHRKLGKEMD…LIENYAGKFP (293 aa)) form a catalytic region. Positions 335, 386, and 512 each coordinate Zn(2+).

It belongs to the class-II aminoacyl-tRNA synthetase family. As to quaternary structure, homodimer. It depends on Zn(2+) as a cofactor.

Its subcellular location is the cytoplasm. It carries out the reaction tRNA(Thr) + L-threonine + ATP = L-threonyl-tRNA(Thr) + AMP + diphosphate + H(+). In terms of biological role, catalyzes the attachment of threonine to tRNA(Thr) in a two-step reaction: L-threonine is first activated by ATP to form Thr-AMP and then transferred to the acceptor end of tRNA(Thr). Also edits incorrectly charged L-seryl-tRNA(Thr). In Pelagibacter ubique (strain HTCC1062), this protein is Threonine--tRNA ligase.